A 488-amino-acid chain; its full sequence is Zinc metalloproteinase-disintegrin VMP-II (488 aa).

The signal sequence occupies residues 1–20 (MIQVLLVTICLAVFPYQGSS). Residues 21-191 (IILESGNVND…KASQSNIPPE (171 aa)) constitute a propeptide that is removed on maturation. The 199-residue stretch at 198–396 (RYIELVVVAD…STTRCLHNEP (199 aa)) folds into the Peptidase M12B domain. Ca(2+) contacts are provided by glutamate 201 and aspartate 285. Asparagine 296 carries an N-linked (GlcNAc...) asparagine glycan. Cystine bridges form between cysteine 309-cysteine 391, cysteine 349-cysteine 373, and cysteine 351-cysteine 356. Histidine 334 contributes to the Zn(2+) binding site. The active site involves glutamate 335. Zn(2+)-binding residues include histidine 338 and histidine 344. Positions 391, 394, 409, 413, 416, and 419 each coordinate Ca(2+). Residues 404–488 (PPFCGNYFKE…ADCPRNGLYG (85 aa)) form the Disintegrin domain. Disulfide bonds link cysteine 407/cysteine 426, cysteine 418/cysteine 436, cysteine 420/cysteine 431, cysteine 430/cysteine 453, cysteine 444/cysteine 450, cysteine 449/cysteine 474, and cysteine 462/cysteine 481. The Cell attachment site motif lies at 466 to 468 (RGD).

This sequence belongs to the venom metalloproteinase (M12B) family. P-II subfamily. P-IIb sub-subfamily. As to quaternary structure, homodimer; disulfide-linked (disintegrin). Zn(2+) is required as a cofactor. As to expression, expressed by the venom gland.

It is found in the secreted. In terms of biological role, zinc metalloproteinase-disintegrin VMP-II: inhibits ADP-induced platelet aggregation (probably by binding integrin alpha-IIb/beta-3 (ITGA2B/ITGB3)) and degrades fibrinogen. Its function is as follows. Recombinant disintegrin r-Cam-dis (413-488): this recombinant protein inhibits platelet adhesion to fibrinogen (IC(50) is 1 nM), inhibits collagen- (IC(50) is 18 nM) and ADP-induced (IC(50) is 6 nM) platelet aggregation, and also inhibits platelet function on clot retraction. May act by binding integrin alpha-IIb/beta-3 (ITGA2B/ITGB3). This chain is Zinc metalloproteinase-disintegrin VMP-II, found in Crotalus adamanteus (Eastern diamondback rattlesnake).